Reading from the N-terminus, the 327-residue chain is Cobalamin biosynthesis protein CobD (327 aa).

4 helical membrane passes run 61 to 78 (MWLT…GLVI), 80 to 102 (SILP…ILLA), 160 to 182 (GIVA…YKLI), and 300 to 322 (AALV…ASLV).

The protein belongs to the CobD/CbiB family.

The protein localises to the cell membrane. It functions in the pathway cofactor biosynthesis; adenosylcobalamin biosynthesis. Its function is as follows. Converts cobyric acid to cobinamide by the addition of aminopropanol on the F carboxylic group. The chain is Cobalamin biosynthesis protein CobD from Brucella suis biovar 1 (strain 1330).